The primary structure comprises 240 residues: UDP-2,3-diacylglucosamine hydrolase (240 aa).

Positions 8, 10, 41, 79, and 114 each coordinate Mn(2+). Residue 79 to 80 (NR) coordinates substrate. 5 residues coordinate substrate: aspartate 122, serine 160, asparagine 164, lysine 167, and histidine 195. Positions 195 and 197 each coordinate Mn(2+).

Belongs to the LpxH family. Mn(2+) serves as cofactor.

It localises to the cell inner membrane. The enzyme catalyses UDP-2-N,3-O-bis[(3R)-3-hydroxytetradecanoyl]-alpha-D-glucosamine + H2O = 2-N,3-O-bis[(3R)-3-hydroxytetradecanoyl]-alpha-D-glucosaminyl 1-phosphate + UMP + 2 H(+). It participates in glycolipid biosynthesis; lipid IV(A) biosynthesis; lipid IV(A) from (3R)-3-hydroxytetradecanoyl-[acyl-carrier-protein] and UDP-N-acetyl-alpha-D-glucosamine: step 4/6. Its function is as follows. Hydrolyzes the pyrophosphate bond of UDP-2,3-diacylglucosamine to yield 2,3-diacylglucosamine 1-phosphate (lipid X) and UMP by catalyzing the attack of water at the alpha-P atom. Involved in the biosynthesis of lipid A, a phosphorylated glycolipid that anchors the lipopolysaccharide to the outer membrane of the cell. This chain is UDP-2,3-diacylglucosamine hydrolase, found in Escherichia coli O127:H6 (strain E2348/69 / EPEC).